The sequence spans 25 residues: Small ribosomal subunit protein eS32 (25 aa).

Residues 1 to 25 (MRAKWRKKRMRRLKRKRRKMRQRSK) form a disordered region.

It belongs to the eukaryotic ribosomal protein eS32 family. Component of the large ribosomal subunit.

The protein resides in the cytoplasm. Component of the small ribosomal subunit. The ribosome is a large ribonucleoprotein complex responsible for the synthesis of proteins in the cell. This Cyprinus carpio (Common carp) protein is Small ribosomal subunit protein eS32 (rpl41).